Consider the following 736-residue polypeptide: Elongation factor 2 (736 aa).

The 244-residue stretch at 18–261 (EQVRNIGITA…MVVKFIPNPR (244 aa)) folds into the tr-type G domain. GTP is bound by residues 27–34 (AHVDHGKT), 93–97 (DTPGH), and 147–150 (NKVD). His602 carries the diphthamide modification.

This sequence belongs to the TRAFAC class translation factor GTPase superfamily. Classic translation factor GTPase family. EF-G/EF-2 subfamily.

The protein localises to the cytoplasm. In terms of biological role, catalyzes the GTP-dependent ribosomal translocation step during translation elongation. During this step, the ribosome changes from the pre-translocational (PRE) to the post-translocational (POST) state as the newly formed A-site-bound peptidyl-tRNA and P-site-bound deacylated tRNA move to the P and E sites, respectively. Catalyzes the coordinated movement of the two tRNA molecules, the mRNA and conformational changes in the ribosome. This chain is Elongation factor 2, found in Staphylothermus marinus (strain ATCC 43588 / DSM 3639 / JCM 9404 / F1).